The chain runs to 535 residues: Putative cysteine ligase BshC (535 aa).

A coiled-coil region spans residues 420 to 477 (DTFKALKESINSAYKNLQEKLAPLGADFQKLTGENLGRVMAQVKYLEERAQKYHREKN).

It belongs to the BshC family.

Functionally, involved in bacillithiol (BSH) biosynthesis. May catalyze the last step of the pathway, the addition of cysteine to glucosamine malate (GlcN-Mal) to generate BSH. The polypeptide is Putative cysteine ligase BshC (Carboxydothermus hydrogenoformans (strain ATCC BAA-161 / DSM 6008 / Z-2901)).